Consider the following 589-residue polypeptide: Nicotinate phosphoribosyltransferase (589 aa).

Residues 1–30 (MSQSNTPLKRKKTENGYSENGSTTGATSNQ) are disordered. Polar residues predominate over residues 15–30 (NGYSENGSTTGATSNQ). Nicotinate is bound by residues tyrosine 68 and threonine 256. A Phosphohistidine modification is found at histidine 259. Arginine 356 is a binding site for nicotinate. Position 418 (threonine 418) interacts with 5-phospho-alpha-D-ribose 1-diphosphate.

The protein belongs to the NAPRTase family. The cofactor is Mg(2+). Mn(2+) is required as a cofactor. In terms of processing, transiently phosphorylated on a His residue during the reaction cycle. Phosphorylation strongly increases the affinity for substrates and increases the rate of nicotinate D-ribonucleotide production. Dephosphorylation regenerates the low-affinity form of the enzyme, leading to product release.

It carries out the reaction nicotinate + 5-phospho-alpha-D-ribose 1-diphosphate + ATP + H2O = nicotinate beta-D-ribonucleotide + ADP + phosphate + diphosphate. The protein operates within cofactor biosynthesis; NAD(+) biosynthesis; nicotinate D-ribonucleotide from nicotinate: step 1/1. Catalyzes the first step in the biosynthesis of NAD from nicotinic acid, the ATP-dependent synthesis of beta-nicotinate D-ribonucleotide from nicotinate and 5-phospho-D-ribose 1-phosphate. Helps prevent cellular oxidative stress via its role in NAD biosynthesis. The chain is Nicotinate phosphoribosyltransferase (naprt) from Dictyostelium discoideum (Social amoeba).